A 343-amino-acid chain; its full sequence is Probable long-chain-alcohol O-fatty-acyltransferase 2 (343 aa).

8 helical membrane-spanning segments follow: residues 7–27 (NLIKVWISALISISYCYYISS), 36–56 (LLSLLPIFIIFLLLPLFFSSV), 58–78 (FCVISGFFFTWLANFKLFLFA), 117–137 (PMSKWVLAFKLLIFSFLLHVY), 148–168 (FAFLALFTIHVYLEAELILVF), 235–255 (GMLATFIVSGLMHELIYFYVI), 260–280 (TWEVTCFFLLHGVVTCLEIAM), and 292–312 (AVSGLAITVFLLVTAGWLFYP).

Belongs to the wax synthase family.

Its subcellular location is the membrane. The catalysed reaction is a long chain fatty alcohol + a fatty acyl-CoA = a wax ester + CoA. Functionally, catalyzes the final step in the synthesis of long-chain linear esters (waxes). The sequence is that of Probable long-chain-alcohol O-fatty-acyltransferase 2 (AT2) from Arabidopsis thaliana (Mouse-ear cress).